Reading from the N-terminus, the 241-residue chain is MATVSMRDMLKAGVHFGHQTRYWNPKMKPFIFGARNKVHIINLEKTVPMFNEALAELSKISSRKGKILFVGTKRAASEAVKDAANNCDQFFVNHRWLGGMLTNWKTVRQSIKRLKDLEIQSQDGTFDKLTKKEALMRTRELAKLENSLGGIKDMGGLPDALFVIDADHEHIAIKEANNLGIPVFAIVDTNSDPDGVDFVIPGNDDAIRAVTLYLGAVAATVREGRSQDLASQAEESFVEAE.

This sequence belongs to the universal ribosomal protein uS2 family.

This is Small ribosomal subunit protein uS2 from Enterobacter sp. (strain 638).